The following is a 323-amino-acid chain: 4-hydroxythreonine-4-phosphate dehydrogenase (323 aa).

Threonine 133 lines the substrate pocket. Histidine 161, histidine 206, and histidine 261 together coordinate a divalent metal cation. The substrate site is built by lysine 269, asparagine 278, and arginine 287.

It belongs to the PdxA family. In terms of assembly, homodimer. It depends on Zn(2+) as a cofactor. Requires Mg(2+) as cofactor. Co(2+) is required as a cofactor.

The protein resides in the cytoplasm. The catalysed reaction is 4-(phosphooxy)-L-threonine + NAD(+) = 3-amino-2-oxopropyl phosphate + CO2 + NADH. It functions in the pathway cofactor biosynthesis; pyridoxine 5'-phosphate biosynthesis; pyridoxine 5'-phosphate from D-erythrose 4-phosphate: step 4/5. Catalyzes the NAD(P)-dependent oxidation of 4-(phosphooxy)-L-threonine (HTP) into 2-amino-3-oxo-4-(phosphooxy)butyric acid which spontaneously decarboxylates to form 3-amino-2-oxopropyl phosphate (AHAP). The chain is 4-hydroxythreonine-4-phosphate dehydrogenase from Xanthomonas axonopodis pv. citri (strain 306).